The following is an 83-amino-acid chain: Cytochrome c-554(548) (83 aa).

Heme c contacts are provided by C14, C17, H18, and M63.

In terms of assembly, homodimer. In terms of processing, binds 1 heme c group covalently per subunit.

In Halomonas halodenitrificans (strain ATCC 12084 / NCIMB 8669) (Paracoccus halodenitrificans), this protein is Cytochrome c-554(548).